We begin with the raw amino-acid sequence, 452 residues long: tRNA modification GTPase MnmE (452 aa).

(6S)-5-formyl-5,6,7,8-tetrahydrofolate contacts are provided by R21, E78, and K118. The TrmE-type G domain occupies 214–375; the sequence is GMKVVIAGRP…LRDHLKQAMG (162 aa). Residue N224 coordinates K(+). GTP-binding positions include 224–229, 243–249, and 268–271; these read NAGKSS, TDIAGTT, and DTAG. S228 contributes to the Mg(2+) binding site. K(+) contacts are provided by T243, I245, and T248. T249 is a binding site for Mg(2+). K452 is a (6S)-5-formyl-5,6,7,8-tetrahydrofolate binding site.

It belongs to the TRAFAC class TrmE-Era-EngA-EngB-Septin-like GTPase superfamily. TrmE GTPase family. Homodimer. Heterotetramer of two MnmE and two MnmG subunits. Requires K(+) as cofactor.

It is found in the cytoplasm. Exhibits a very high intrinsic GTPase hydrolysis rate. Involved in the addition of a carboxymethylaminomethyl (cmnm) group at the wobble position (U34) of certain tRNAs, forming tRNA-cmnm(5)s(2)U34. In Haemophilus influenzae (strain 86-028NP), this protein is tRNA modification GTPase MnmE.